The following is a 170-amino-acid chain: Shikimate kinase (170 aa).

15-20 (GAGKTT) contacts ATP. T19 serves as a coordination point for Mg(2+). Substrate-binding residues include D37, R61, and G83. ATP is bound at residue R121. Residue R140 participates in substrate binding.

It belongs to the shikimate kinase family. Monomer. The cofactor is Mg(2+).

It localises to the cytoplasm. It carries out the reaction shikimate + ATP = 3-phosphoshikimate + ADP + H(+). It functions in the pathway metabolic intermediate biosynthesis; chorismate biosynthesis; chorismate from D-erythrose 4-phosphate and phosphoenolpyruvate: step 5/7. Its function is as follows. Catalyzes the specific phosphorylation of the 3-hydroxyl group of shikimic acid using ATP as a cosubstrate. The sequence is that of Shikimate kinase from Neisseria meningitidis serogroup C (strain 053442).